We begin with the raw amino-acid sequence, 184 residues long: Nutrient stress-induced DNA-binding protein (184 aa).

The protein belongs to the Dps family. In terms of assembly, hexamer.

Its function is as follows. Involved in protection of chromosomal DNA from damage under nutrient-limited and oxidative stress conditions. Binds heme. This chain is Nutrient stress-induced DNA-binding protein (dpsA), found in Nostoc sp. (strain PCC 7120 / SAG 25.82 / UTEX 2576).